A 993-amino-acid chain; its full sequence is MGMRPTARMPKLTRRSRILILIALGVIALLLAGPRLIDAYVDWLWFGELGYRSVFSTVLVTRFVVFLIAGLLVGGIVFAGLAVAYRTRPVFVPSNDNDPVARYRALVLSRLRLVSVGVPVAIGLLAGIIAQSYWVRIQLFLHGGDFGIKDPQFGKDLGFYAFELPFYRLLLSYLFVAVFLAFVANLLAHYIFGGIRLSGRTGALSRSARIQLVTLVGLLVLLKAVAYWLDRYELLSHTRGGKPITGAGYTDINAVLPAKLILMAIALICAAAVFSAITMRDLRIPAIGLVLLLLSSLIVGAGWPLIVEQISVKPNAAQKESEYISRSITATRQAYGLTSDVVTYRNYTGDAQATAQQVADDRATTSNIRLLDPTIVSPAFTQFQQGKNFYYFPDQLSIDRYLDRNGALRDYVVAVRELNPDRLIDNQRDWINRHTVYTHGNGFIASPANTVRGIANDPNQNGGYPEFLVNVVGANGNVVSDGPAPLDQPRVYFGPVISNTSADYAIVGRNGADREYDYETSTETKNYTYTGLGGVPIGDWLSRSVFAAKFAERNFLFSNVIGSNSKILFNRDPARRVEAVAPWLTTDSSVYPAIVNKRLVWIIDGYTTLDNYPYSELTSLESATADSNEVAFNKLAPDKRVSYIRNSVKATVDAYDGTVTLYQQDEQDPVLKAWMQVFPGTVKPKSDISPELAEHLRYPEDLFKVQRMLLAKYHVNDPVTFFSTSDFWDVPLDPNPTASSYQPPYYIVAKNIAKNDNSSSYQLTSAMNRFKRDYLAAYISASSDPATYGRITVLTIPGQVNGPKLANNAITTDPAVSQDLGVIGRDNQNRIRWGNLLTLPVGQGGLLYVEPVYASPGASDAASSYPRLIRVAMMYNDKIGYGPTVRDALTGLFGPGAGAAATNIQPTEGGAPAASPPANAPAPAVTPGSAPPVAAPPVPDGSVTLSPAKAAVLQEIQAAIGAAKDAQKKGDFAGYGAALQRLDDAITKYNNTK.

7 helical membrane passes run 18–38 (ILIL…RLID), 63–83 (FVVF…GLAV), 113–133 (LVSV…AQSY), 175–195 (FVAV…FGGI), 210–230 (IQLV…YWLD), 254–274 (AVLP…AAVF), and 287–307 (IGLV…PLIV). The tract at residues 903–941 (NIQPTEGGAPAASPPANAPAPAVTPGSAPPVAAPPVPDG) is disordered. The span at 929–939 (SAPPVAAPPVP) shows a compositional bias: pro residues.

This sequence belongs to the UPF0182 family.

The protein localises to the cell membrane. The polypeptide is UPF0182 protein MAP_3291c (Mycolicibacterium paratuberculosis (strain ATCC BAA-968 / K-10) (Mycobacterium paratuberculosis)).